The sequence spans 165 residues: Photosystem I assembly protein Ycf3 (165 aa).

TPR repeat units follow at residues 32-65, 69-102, and 117-150; these read AFTYYRDGMSAQSEGNYAEALQNYYEAMRLEIDP, SYILYNIGLIHTSNGEHTKALEYYFRALERNPFL, and GEQAIRQGDSEIAEAWFDQAAEYWKQALTLTPGN.

The protein belongs to the Ycf3 family.

Its subcellular location is the plastid. The protein resides in the chloroplast thylakoid membrane. Its function is as follows. Essential for the assembly of the photosystem I (PSI) complex. May act as a chaperone-like factor to guide the assembly of the PSI subunits. In Spinacia oleracea (Spinach), this protein is Photosystem I assembly protein Ycf3.